Consider the following 431-residue polypeptide: Serine hydroxymethyltransferase 2 (431 aa).

(6S)-5,6,7,8-tetrahydrofolate-binding positions include Leu-131 and 135–137 (GHL). Position 240 is an N6-(pyridoxal phosphate)lysine (Lys-240). A (6S)-5,6,7,8-tetrahydrofolate-binding site is contributed by Glu-256.

Belongs to the SHMT family. Homodimer. The cofactor is pyridoxal 5'-phosphate.

It is found in the cytoplasm. The enzyme catalyses (6R)-5,10-methylene-5,6,7,8-tetrahydrofolate + glycine + H2O = (6S)-5,6,7,8-tetrahydrofolate + L-serine. It functions in the pathway one-carbon metabolism; tetrahydrofolate interconversion. It participates in amino-acid biosynthesis; glycine biosynthesis; glycine from L-serine: step 1/1. Functionally, catalyzes the reversible interconversion of serine and glycine with tetrahydrofolate (THF) serving as the one-carbon carrier. This reaction serves as the major source of one-carbon groups required for the biosynthesis of purines, thymidylate, methionine, and other important biomolecules. Also exhibits THF-independent aldolase activity toward beta-hydroxyamino acids, producing glycine and aldehydes, via a retro-aldol mechanism. The protein is Serine hydroxymethyltransferase 2 of Vibrio vulnificus (strain CMCP6).